The sequence spans 317 residues: Transaldolase (317 aa).

Catalysis depends on Lys-126, which acts as the Schiff-base intermediate with substrate.

The protein belongs to the transaldolase family. Type 1 subfamily. As to quaternary structure, homodimer.

It localises to the cytoplasm. The catalysed reaction is D-sedoheptulose 7-phosphate + D-glyceraldehyde 3-phosphate = D-erythrose 4-phosphate + beta-D-fructose 6-phosphate. It functions in the pathway carbohydrate degradation; pentose phosphate pathway; D-glyceraldehyde 3-phosphate and beta-D-fructose 6-phosphate from D-ribose 5-phosphate and D-xylulose 5-phosphate (non-oxidative stage): step 2/3. In terms of biological role, transaldolase is important for the balance of metabolites in the pentose-phosphate pathway. The polypeptide is Transaldolase (Paraburkholderia phytofirmans (strain DSM 17436 / LMG 22146 / PsJN) (Burkholderia phytofirmans)).